A 294-amino-acid chain; its full sequence is 2,2',3-trihydroxybiphenyl dioxygenase (294 aa).

VOC domains follow at residues 7–120 and 144–264; these read GYLI…LYVE and GLGH…LGFG. Fe cation is bound by residues His-147, His-209, and Glu-260.

It belongs to the extradiol ring-cleavage dioxygenase family. As to quaternary structure, monomer. It depends on Fe(2+) as a cofactor.

It functions in the pathway xenobiotic degradation; dibenzo-p-dioxin degradation; 2-hydroxymuconate and catechol from dibenzo-p-dioxin: step 2/3. The protein operates within xenobiotic degradation; dibenzofuran degradation; 2-hydroxy-2,4-pentadienoate and salicylate from dibenzofuran: step 2/3. Functionally, responsible for meta-cleavage of the first aromatic ring of 2,2',3-trihydroxybiphenyl and 2,3-dihydroxybiphenyl. 2,2',3-trihydroxydiphenyl ether, catechol, 3-methylcatechol, and 4-methylcatechol are oxidized less efficiently and 3,4-dihydroxybiphenyl is oxidized considerably less efficiently. The protein is 2,2',3-trihydroxybiphenyl dioxygenase (dbfB) of Sphingomonas paucimobilis (Pseudomonas paucimobilis).